Here is a 187-residue protein sequence, read N- to C-terminus: Preprocaerulein clone PXC202 (187 aa).

A propeptide spanning residues Asn1 to Gly9 is cleaved from the precursor. Positions Asn1–Arg21 are disordered. The residue at position 13 (Tyr13) is a Sulfotyrosine. Position 19 is a phenylalanine amide (Phe19). A propeptide spanning residues Asp23–Gly73 is cleaved from the precursor. Tyr77 bears the Sulfotyrosine mark. Phenylalanine amide is present on Phe83. Residues Asp87–Gly137 constitute a propeptide that is removed on maturation. Sulfotyrosine is present on Tyr141. A Phenylalanine amide modification is found at Phe147. The propeptide occupies Asp151 to Gly152. Sulfotyrosine is present on Tyr156. Phe162 bears the Phenylalanine amide mark. A propeptide spanning residues Asp166–Leu187 is cleaved from the precursor.

It belongs to the gastrin/cholecystokinin family. In terms of tissue distribution, expressed by the skin glands.

The protein localises to the secreted. Its function is as follows. The pharmacological activities of caerulein are quite similar to the physiological activities of gastrin and related peptides. The protein is Preprocaerulein clone PXC202 of Xenopus laevis (African clawed frog).